We begin with the raw amino-acid sequence, 699 residues long: Protein Scribble homolog let-413 (699 aa).

LRR repeat units follow at residues 37–59 (KLED…FSLR), 60–81 (HLRI…IGNL), 83–104 (QLIE…MQNC), 106–127 (LLTT…ICEC), 129–150 (SITI…IGSL), 152–174 (NLRV…VELR), 175–196 (KLEE…IGKL), 198–219 (SLRE…ISGC), 221–242 (MLDQ…LGRM), 244–265 (NLTD…FGEL), 267–288 (RLQM…IGKC), 290–311 (SLTE…IGDL), 313–334 (QLTT…IGNC), 336–357 (SLTV…IGKC), 359–380 (NLTV…VKVL), and 382–403 (KLQA…SETR). The PDZ domain occupies 584-665 (AGGTSNDPAP…RSPSPVSRTS (82 aa)). Residues 656-699 (RSPSPVSRTSEPSLNGSSHQLNHFDAGSPDSTMFVTSSTPVYAS) are disordered. Polar residues-rich tracts occupy residues 659 to 676 (SPVS…SHQL) and 684 to 699 (PDST…VYAS).

This sequence belongs to the LAP (LRR and PDZ) protein family. In terms of tissue distribution, expressed in the terminal web of the intestine. Expressed in seam cells. Expressed in the basolateral surfaces of epithelia and the nervous system. Expressed in the intestine, epidermis, excretory canal, reproductive system including vulva, uterus and spermatheca, in both larval and adult stage animals.

It localises to the basolateral cell membrane. Functionally, critical role in assembling adherens junctions; adapter protein involved in polarizing protein trafficking in epithelial cells. Necessary to maintain, not establish, the entire terminal web (organelle-depleted, intermediate filament-rich layer of cytoplasm that underlies the apical microvilli of polarized epithelial cells) or brush border assembly at the apical surface gut cells. Required for correct localization of ifb-2 intermediate filaments in the terminal web. Required for dlg-1 and hmr-1 lateral localization. Maintains cell polarity by correctly positioning adherens junction protein components including ajm-1 and hmp-1 at discrete subapical positions. Plays a role in the correct localization of the dlg-1-ajm-1 complex, polarity protein par-3, and actin microfilament to the apical junction of spermatheca cells, and is required for ovulation. Regulates the establishment of newly-formed epithelia in conjunction with dlg-1. Required in the epidermis during larval development. Plays a role in cellular junction integrity and in the directed outgrowth of seam cells, towards neighboring seam cells, during larval development; probably acts by promoting the assembly and stability of dlg-1 at apical junctions. In Caenorhabditis elegans, this protein is Protein Scribble homolog let-413.